The sequence spans 721 residues: MAAATALDSLPAPLRSLRLKTKQQELLLRVSALALIYVLAFVVRLFSVLRYESMIHEFDPYFNYRTTLFLSDHGFSEFWNWFDFESWYPLGRVVGGTLFPGLMVTAALLHRLLRALSLAVHIREVCVLTAPFFAANTTLVAYAFGREIWDSGAGLVAAALIAVCPGYISRSVAGSYDNEGVAIFALLLTFYLFVRAVNTGSLAWSLASAFGYFYMVSAWGGYVFIINLLPLYVLVLLVTGRYSQRLYVAYNSTYVLGMLLAMQIRFVGFQHVQSGEHMAAMGVFFLLQVFFFLDWVKYLLNDAKLFKSFLRITLTCVITVGTLALGIGTASGYISPWTGRFYSLLDPTYAKDHIPIIASVSEHQPTAWSSFMFDFHILLFLFPAGLYFCFKRLSDATIFIVMYGLTSMYFAGVMVRLILVAAPAVCLISAIAASATIKNLTTLIRTKSKSPQTVSGKSSGSKAAAKGAVDQSLPFQQNVAIALLLGAFYLLSRYAVHCTWVTSEAYSSPSIVLAARGHNGGRVIFDDYREAYYWLRQNTPSDAKIMSWWDYGYQITAMGNRTVIVDNNTWNNTHIATVGRAMSSYEDEAYEIMQSLDVNYVLVVFGGVTGYSSDDINKFLWMVRIGGGVFPVIKEPDYLVNGEYRVDKGAAPKMLNCLMYKLCYYRFGELTTEYGKPPGYDRVRGVEIGNKDIKLEYLEEAFTTSNWIVRIYKVKPPKNRS.

Residues M1–E25 lie on the Cytoplasmic side of the membrane. Residues L26–F46 traverse the membrane as a helical segment. At S47 to T129 the chain is on the lumenal side. A DXD motif 1 motif is present at residues E57–D59. D59 provides a ligand contact to Mn(2+). Residues A130–I148 traverse the membrane as a helical segment. Over W149 to D150 the chain is Cytoplasmic. The helical transmembrane segment at S151–I168 threads the bilayer. Topologically, residues S169 to E179 are lumenal. Residues D177 and E179 each contribute to the Mn(2+) site. Positions D177–E179 match the DXD motif 2 motif. A helical membrane pass occupies residues G180 to T199. Residues G200 to S201 are Cytoplasmic-facing. Residues L202 to V216 traverse the membrane as a helical segment. At S217 to G221 the chain is on the lumenal side. Residues Y222–V238 form a helical membrane-spanning segment. The Cytoplasmic portion of the chain corresponds to T239–S243. Residues Q244–F269 traverse the membrane as a helical segment. The Lumenal segment spans residues Q270 to H277. The helical transmembrane segment at M278 to K297 threads the bilayer. The Cytoplasmic segment spans residues Y298–T313. A helical membrane pass occupies residues L314 to I334. Residues S335–A367 lie on the Lumenal side of the membrane. Residues S359 to E362 carry the SVSE motif motif. The helical transmembrane segment at W368 to F390 threads the bilayer. The Cytoplasmic segment spans residues K391–A396. The helical transmembrane segment at T397 to V413 threads the bilayer. The Lumenal segment spans residues M414–L417. R416 is a binding site for dolichyl diphosphooligosaccharide. The helical transmembrane segment at I418–N439 threads the bilayer. The Cytoplasmic segment spans residues L440–Q471. A helical membrane pass occupies residues S472–S492. The Lumenal segment spans residues R493–S721. The tract at residues W548 to D550 is interacts with target acceptor peptide in protein substrate. Positions W548–G552 match the WWDYG motif motif. Y553 contributes to the dolichyl diphosphooligosaccharide binding site. 2 N-linked (GlcNAc...) asparagine glycosylation sites follow: N560 and N567. N-linked (GlcNAc...) (high mannose) asparagine glycosylation occurs at N571. The DK motif motif lies at D615–M622.

It belongs to the STT3 family. Component of the oligosaccharyltransferase (OST) complex. Mg(2+) is required as a cofactor. Mn(2+) serves as cofactor.

It localises to the endoplasmic reticulum membrane. It carries out the reaction a di-trans,poly-cis-dolichyl diphosphooligosaccharide + L-asparaginyl-[protein] = N(4)-(oligosaccharide-(1-&gt;4)-N-acetyl-beta-D-glucosaminyl-(1-&gt;4)-N-acetyl-beta-D-glucosaminyl)-L-asparaginyl-[protein] + a di-trans,poly-cis-dolichyl diphosphate + H(+). Its pathway is protein modification; protein glycosylation. Catalytic subunit of the oligosaccharyl transferase (OST) complex that catalyzes the initial transfer of a defined glycan (Glc(3)Man(9)GlcNAc(2) in eukaryotes) from the lipid carrier dolichol-pyrophosphate to an asparagine residue within an Asn-X-Ser/Thr consensus motif in nascent polypeptide chains, the first step in protein N-glycosylation. N-glycosylation occurs cotranslationally and the complex associates with the Sec61 complex at the channel-forming translocon complex that mediates protein translocation across the endoplasmic reticulum (ER). All subunits are required for a maximal enzyme activity. This subunit contains the active site and the acceptor peptide and donor lipid-linked oligosaccharide (LLO) binding pockets. This chain is Dolichyl-diphosphooligosaccharide--protein glycosyltransferase subunit STT3B (STT3B), found in Oryza sativa subsp. japonica (Rice).